A 205-amino-acid chain; its full sequence is Heat shock protein beta-1 (205 aa).

An Omega-N-methylarginine modification is found at Arg-12. Ser-15 is modified (phosphoserine; by MAPKAPK2 and MAPKAPK3). 2 positions are modified to phosphoserine: Ser-26 and Ser-65. The interaction with TGFB1I1 stretch occupies residues 70–205; it reads APAYSRALSR…AAKSDETAAK (136 aa). A sHSP domain is found at 76–184; that stretch reads ALSRQLSSGV…QSNEITIPVT (109 aa). Phosphoserine; by MAPKAPK2, MAPKAPK3 and MAPKAPK5 occurs at positions 78 and 82. Residues Ser-83, Ser-86, and Ser-98 each carry the phosphoserine modification. Lys-123 carries the N6-acetyllysine modification. At Thr-174 the chain carries Phosphothreonine. A phosphoserine mark is found at Ser-176 and Ser-199.

Belongs to the small heat shock protein (HSP20) family. Homooligomer. Homodimer; becomes monomeric upon activation. Heterooligomer; with HSPB6. Associates with alpha- and beta-tubulin. Interacts with TGFB1I1. Interacts with CRYAB. Interacts with HSPB8. Interacts with HSPBAP1. In terms of processing, phosphorylated upon exposure to protein kinase C activators and heat shock. Phosphorylation by MAPKAPK2 and MAPKAPK3 in response to stress dissociates HSPB1 from large small heat-shock protein (sHsps) oligomers and impairs its chaperone activity and ability to protect against oxidative stress effectively. Phosphorylation by MAPKAPK5 in response to PKA stimulation induces F-actin rearrangement. As to expression, detected in all tissues tested: skeletal muscle, heart, aorta, large intestine, small intestine, stomach, esophagus, bladder, adrenal gland, thyroid, pancreas, testis, adipose tissue, kidney, liver, spleen, cerebral cortex, blood serum and cerebrospinal fluid. Highest levels are found in the heart and in tissues composed of striated and smooth muscle.

It is found in the cytoplasm. Its subcellular location is the nucleus. The protein localises to the cytoskeleton. It localises to the spindle. Its function is as follows. Small heat shock protein which functions as a molecular chaperone probably maintaining denatured proteins in a folding-competent state. Plays a role in stress resistance and actin organization. Through its molecular chaperone activity may regulate numerous biological processes including the phosphorylation and the axonal transport of neurofilament proteins. This Homo sapiens (Human) protein is Heat shock protein beta-1 (HSPB1).